The primary structure comprises 484 residues: tRNA sulfurtransferase (484 aa).

Residues 63 to 167 (QAFGERLACI…GDKLYMVTKR (105 aa)) enclose the THUMP domain. ATP-binding positions include 185-186 (LI), Lys267, Gly289, and Gln298. Cys346 and Cys458 are oxidised to a cystine. A Rhodanese domain is found at 406–484 (IDTNEVVIDI…GYHNVKVYRP (79 aa)). The active-site Cysteine persulfide intermediate is the Cys458.

Belongs to the ThiI family.

The protein resides in the cytoplasm. The enzyme catalyses [ThiI sulfur-carrier protein]-S-sulfanyl-L-cysteine + a uridine in tRNA + 2 reduced [2Fe-2S]-[ferredoxin] + ATP + H(+) = [ThiI sulfur-carrier protein]-L-cysteine + a 4-thiouridine in tRNA + 2 oxidized [2Fe-2S]-[ferredoxin] + AMP + diphosphate. It catalyses the reaction [ThiS sulfur-carrier protein]-C-terminal Gly-Gly-AMP + S-sulfanyl-L-cysteinyl-[cysteine desulfurase] + AH2 = [ThiS sulfur-carrier protein]-C-terminal-Gly-aminoethanethioate + L-cysteinyl-[cysteine desulfurase] + A + AMP + 2 H(+). Its pathway is cofactor biosynthesis; thiamine diphosphate biosynthesis. Its function is as follows. Catalyzes the ATP-dependent transfer of a sulfur to tRNA to produce 4-thiouridine in position 8 of tRNAs, which functions as a near-UV photosensor. Also catalyzes the transfer of sulfur to the sulfur carrier protein ThiS, forming ThiS-thiocarboxylate. This is a step in the synthesis of thiazole, in the thiamine biosynthesis pathway. The sulfur is donated as persulfide by IscS. The sequence is that of tRNA sulfurtransferase from Shewanella sp. (strain ANA-3).